The sequence spans 319 residues: Annexin D4 (319 aa).

Annexin repeat units lie at residues 1–75 (MALP…EFSR) and 86–157 (HPWE…GLVS). Ca(2+)-binding residues include Gly-19, Gly-21, and Glu-72. Residue Thr-115 is modified to Phosphothreonine. A phosphotyrosine mark is found at Tyr-159 and Tyr-211. 2 Annexin repeats span residues 169 to 240 (DSAK…ICLL) and 241 to 316 (KPAL…TLLS). Ser-277 bears the Phosphoserine mark. Tyr-287 carries the post-translational modification Phosphotyrosine.

Belongs to the annexin (TC 1.A.31.1) family. Expressed mainly in roots and flowers. Lower in stems and leaves.

May be involved in osmotic stress and abscisic acid signaling in a calcium-dependent manner. This is Annexin D4 (ANN4) from Arabidopsis thaliana (Mouse-ear cress).